A 431-amino-acid chain; its full sequence is Enolase (431 aa).

Residue glutamine 168 coordinates (2R)-2-phosphoglycerate. Catalysis depends on glutamate 210, which acts as the Proton donor. 3 residues coordinate Mg(2+): aspartate 247, glutamate 291, and aspartate 318. (2R)-2-phosphoglycerate-binding residues include lysine 343, arginine 372, serine 373, and lysine 394. Catalysis depends on lysine 343, which acts as the Proton acceptor.

This sequence belongs to the enolase family. As to quaternary structure, component of the RNA degradosome, a multiprotein complex involved in RNA processing and mRNA degradation. Mg(2+) serves as cofactor.

It localises to the cytoplasm. It is found in the secreted. The protein resides in the cell surface. It carries out the reaction (2R)-2-phosphoglycerate = phosphoenolpyruvate + H2O. It participates in carbohydrate degradation; glycolysis; pyruvate from D-glyceraldehyde 3-phosphate: step 4/5. Functionally, catalyzes the reversible conversion of 2-phosphoglycerate (2-PG) into phosphoenolpyruvate (PEP). It is essential for the degradation of carbohydrates via glycolysis. The polypeptide is Enolase (Acinetobacter baylyi (strain ATCC 33305 / BD413 / ADP1)).